We begin with the raw amino-acid sequence, 361 residues long: 3-galactosyl-N-acetylglucosaminide 4-alpha-L-fucosyltransferase FUT3 (361 aa).

Topologically, residues 1 to 15 are cytoplasmic; sequence MDPLGAAKPQWPWRR. A helical; Signal-anchor for type II membrane protein membrane pass occupies residues 16–34; sequence CLAALLFQLLVAVCFFSYL. Topologically, residues 35 to 361 are lumenal; the sequence is RVSRDDATGS…TVRSIAAWFT (327 aa). The disordered stretch occupies residues 39–58; that stretch reads DDATGSPRAPSGSSRQDTTP. N-linked (GlcNAc...) asparagine glycans are attached at residues Asn-154 and Asn-185.

This sequence belongs to the glycosyltransferase 10 family. Glycosylated. As to expression, highly expressed in stomach, colon, small intestine, lung and kidney and to a lesser extent in salivary gland, bladder, uterus and liver.

It localises to the golgi apparatus. Its subcellular location is the golgi stack membrane. The catalysed reaction is a beta-D-galactosyl-(1-&gt;3)-N-acetyl-beta-D-glucosaminyl derivative + GDP-beta-L-fucose = a beta-D-galactosyl-(1-&gt;3)-[alpha-L-fucosyl-(1-&gt;4)]-N-acetyl-beta-D-glucosaminyl derivative + GDP + H(+). It catalyses the reaction an N-acetyl-alpha-neuraminyl-(2-&gt;3)-beta-D-galactosyl-(1-&gt;4)-N-acetyl-beta-D-glucosaminyl derivative + GDP-beta-L-fucose = an alpha-Neu5Ac-(2-&gt;3)-beta-D-Gal-(1-&gt;4)-[alpha-L-Fuc-(1-&gt;3)]-beta-D-GlcNAc derivative + GDP + H(+). The enzyme catalyses a beta-D-galactosyl-(1-&gt;4)-N-acetyl-beta-D-glucosaminyl derivative + GDP-beta-L-fucose = a beta-D-galactosyl-(1-&gt;4)-[alpha-L-fucosyl-(1-&gt;3)]-N-acetyl-beta-D-glucosaminyl derivative + GDP + H(+). It carries out the reaction an alpha-Neu5Ac-(2-&gt;3)-beta-D-Gal-(1-&gt;4)-beta-D-GlcNAc-(1-&gt;3)-beta-D-Gal-(1-&gt;4)-[alpha-L-Fuc-(1-&gt;3)]-beta-D-GlcNAc derivative + GDP-beta-L-fucose = an alpha-Neu5Ac-(2-&gt;3)-beta-D-Gal-(1-&gt;4)-[alpha-L-Fuc-(1-&gt;3)]-beta-D-GlcNAc-(1-&gt;3)-beta-D-Gal-(1-&gt;4)-[alpha-L-Fuc-(1-&gt;3)]-beta-D-GlcNAc derivative + GDP + H(+). The catalysed reaction is Lc4Cer + GDP-beta-L-fucose = a lactoside III(4)-a-Fuc-Lc4Cer + GDP + H(+). It catalyses the reaction a beta-D-Gal-(1-&gt;3)-beta-D-GlcNAc-(1-&gt;3)-beta-D-Gal-(1-&gt;4)-beta-D-Glc-(1&lt;-&gt;1')-Cer(d18:1(4E)) + GDP-beta-L-fucose = a III(4)-a-Fuc-Lc4Cer(d18:1(4E)) + GDP + H(+). The enzyme catalyses N-acetyl-alpha-neuraminosyl-(2-&gt;3)-beta-D-galactosyl-(1-&gt;3)-[N-acetyl-alpha-neuraminosyl-(2-&gt;6)]-N-acetyl-beta-D-glucosaminyl-(1-&gt;3)-beta-D-galactosyl-(1-&gt;4)-beta-D-glucosyl-(1&lt;-&gt;1')-N-acyl-sphing-4-enine + GDP-beta-L-fucose = N-acetyl-alpha-neuraminosyl-(2-&gt;3)-beta-D-galactosyl-(1-&gt;3)-alpha-L-fucosyl-(1-&gt;4)-[N-acetyl-alpha-neuraminosyl-(2-&gt;6)-N-acetyl-beta-D-glucosaminyl-(1-&gt;3)]-beta-D-galactosyl-(1-&gt;4)-beta-D-glucosyl-(1&lt;-&gt;1')-N-acyl-sphing-4-enine + GDP + H(+). It carries out the reaction N-acetyl-alpha-neuraminosyl-(2-&gt;3)-beta-D-galactosyl-(1-&gt;3)-N-acetyl-beta-D-glucosaminyl-(1-&gt;3)-beta-D-galactosyl-(1-&gt;4)-beta-D-glucosyl-(1&lt;-&gt;1')-N-acyl-sphing-4-enine + GDP-beta-L-fucose = N-acetyl-alpha-neuraminosyl-(2-&gt;3)-beta-D-galactosyl-(1-&gt;3)-alpha-L-fucosyl-(1-&gt;4)-[N-acetyl-beta-D-glucosaminyl-(1-&gt;3)]-beta-D-galactosyl-(1-&gt;4)-beta-D-glucosyl-(1&lt;-&gt;1')-N-acyl-sphing-4-enine + GDP + H(+). The catalysed reaction is beta-D-galactosyl-(1-&gt;3)-N-acetyl-D-glucosamine + GDP-beta-L-fucose = beta-D-galactosyl-(1-&gt;3)-[alpha-L-fucosyl-(1-&gt;4)]-N-acetyl-D-glucosamine + GDP + H(+). It catalyses the reaction alpha-L-Fuc-(1-&gt;2)-beta-D-Gal-(1-&gt;3)-D-GlcNAc + GDP-beta-L-fucose = alpha-L-Fuc-(1-&gt;2)-beta-D-Gal-(1-&gt;3)-[alpha-L-Fuc-(1-&gt;4)]-D-GlcNAc + GDP + H(+). The enzyme catalyses alpha-L-Fuc-(1-&gt;2)-beta-D-Gal-(1-&gt;4)-D-GlcNAc + GDP-beta-L-fucose = alpha-L-Fuc-(1-&gt;2)-beta-D-Gal-(1-&gt;4)-[alpha-L-Fuc-(1-&gt;3)]-D-GlcNAc + GDP + H(+). It carries out the reaction beta-D-galactosyl-(1-&gt;4)-N-acetyl-D-glucosamine + GDP-beta-L-fucose = beta-D-galactosyl-(1-&gt;4)-[alpha-L-fucosyl-(1-&gt;3)]-N-acetyl-D-glucosamine + GDP + H(+). The catalysed reaction is lactose + GDP-beta-L-fucose = beta-D-galactosyl-(1-&gt;4)-[alpha-L-fucosyl-(1-&gt;3)]-D-glucose + GDP + H(+). It catalyses the reaction an alpha-Neu5Ac-(2-&gt;3)-beta-D-Gal-(1-&gt;3)-D-GlcNAc derivative + GDP-beta-L-fucose = an alpha-Neu5Ac-(2-&gt;3)-beta-D-Gal-(1-&gt;3)-[alpha-L-Fuc-(1-&gt;4)]-beta-D-GlcNAc derivative + GDP + H(+). It participates in protein modification; protein glycosylation. Its function is as follows. Catalyzes the transfer of L-fucose, from a guanosine diphosphate-beta-L-fucose, to both the subterminal N-acetyl glucosamine (GlcNAc) of type 1 chain (beta-D-Gal-(1-&gt;3)-beta-D-GlcNAc) glycolipids and oligosaccharides via an alpha(1,4) linkage, and the subterminal glucose (Glc) or GlcNAc of type 2 chain (beta-D-Gal-(1-&gt;4)-beta-D-GlcNAc) oligosaccharides via an alpha(1,3) linkage, independently of the presence of terminal alpha-L-fucosyl-(1,2) moieties on the terminal galactose of these acceptors. Through its catalytic activity, participates in the synthesis of antigens of the Lewis blood group system, i.e. Lewis a (Le(a)), lewis b (Le(b)), Lewis x/SSEA-1 (Le(x)) and lewis y (Le(y)) antigens. Also catalyzes the transfer of L-fucose to subterminal GlcNAc of sialyl- and disialyl-lactotetraosylceramide to produce sialyl Lewis a (sLe(a)) and disialyl Lewis a via an alpha(1,4) linkage and therefore may regulate cell surface sLe(a) expression and consequently regulates adhesive properties to E-selectin, cell proliferation and migration. Catalyzes the transfer of an L-fucose to 3'-sialyl-N-acetyllactosamine by an alpha(1,3) linkage, which allows the formation of sialyl-Lewis x structure and therefore may regulate the sialyl-Lewis x surface antigen expression and consequently adhesive properties to E-selectin. Prefers type 1 chain over type 2 acceptors. Type 1 tetrasaccharide is a better acceptor than type 1 disaccharide suggesting that a beta anomeric configuration of GlcNAc in the substrate is preferred. Lewis-positive (Le(+)) individuals have an active enzyme while Lewis-negative (Le(-)) individuals have an inactive enzyme. This is 3-galactosyl-N-acetylglucosaminide 4-alpha-L-fucosyltransferase FUT3 from Homo sapiens (Human).